Reading from the N-terminus, the 332-residue chain is Cytoskeleton protein RodZ (332 aa).

The Cytoplasmic segment spans residues 1 to 111 (MNTETTQDTT…LKKSRKKRDG (111 aa)). In terms of domain architecture, HTH cro/C1-type spans 19–71 (LREARERLGLTQQTIAERLCLKITTVRDIEDGTTPADLAPTFLRGYIRSYAKL). The H-T-H motif DNA-binding region spans 30–49 (QQTIAERLCLKITTVRDIED). A helical; Signal-anchor for type II membrane protein membrane pass occupies residues 112–132 (WLMIITWLVVLVVLGLTGAWW). Topologically, residues 133-332 (WQNHQAQQAE…QVARLTLTAE (200 aa)) are periplasmic. A disordered region spans residues 149 to 225 (HASSMQSQTE…PSQANATQSQ (77 aa)). Polar residues-rich tracts occupy residues 151–160 (SSMQSQTEGQ) and 168–182 (SAPQETSTAGSAATP). The span at 190–225 (SATIAATPSTPPSSTTASSAAPSSQSPSQANATQSQ) shows a compositional bias: low complexity.

This sequence belongs to the RodZ family.

It is found in the cell inner membrane. Functionally, cytoskeletal protein that is involved in cell-shape control through regulation of the length of the long axis. This chain is Cytoskeleton protein RodZ, found in Pectobacterium atrosepticum (strain SCRI 1043 / ATCC BAA-672) (Erwinia carotovora subsp. atroseptica).